The chain runs to 252 residues: 2-succinyl-6-hydroxy-2,4-cyclohexadiene-1-carboxylate synthase (252 aa).

It belongs to the AB hydrolase superfamily. MenH family. As to quaternary structure, monomer.

It carries out the reaction 5-enolpyruvoyl-6-hydroxy-2-succinyl-cyclohex-3-ene-1-carboxylate = (1R,6R)-6-hydroxy-2-succinyl-cyclohexa-2,4-diene-1-carboxylate + pyruvate. It functions in the pathway quinol/quinone metabolism; 1,4-dihydroxy-2-naphthoate biosynthesis; 1,4-dihydroxy-2-naphthoate from chorismate: step 3/7. It participates in quinol/quinone metabolism; menaquinone biosynthesis. Its function is as follows. Catalyzes a proton abstraction reaction that results in 2,5-elimination of pyruvate from 2-succinyl-5-enolpyruvyl-6-hydroxy-3-cyclohexene-1-carboxylate (SEPHCHC) and the formation of 2-succinyl-6-hydroxy-2,4-cyclohexadiene-1-carboxylate (SHCHC). This is 2-succinyl-6-hydroxy-2,4-cyclohexadiene-1-carboxylate synthase from Salmonella paratyphi A (strain ATCC 9150 / SARB42).